Consider the following 448-residue polypeptide: Probable glycine dehydrogenase (decarboxylating) subunit 1 (448 aa).

This sequence belongs to the GcvP family. N-terminal subunit subfamily. In terms of assembly, the glycine cleavage system is composed of four proteins: P, T, L and H. In this organism, the P 'protein' is a heterodimer of two subunits.

The enzyme catalyses N(6)-[(R)-lipoyl]-L-lysyl-[glycine-cleavage complex H protein] + glycine + H(+) = N(6)-[(R)-S(8)-aminomethyldihydrolipoyl]-L-lysyl-[glycine-cleavage complex H protein] + CO2. The glycine cleavage system catalyzes the degradation of glycine. The P protein binds the alpha-amino group of glycine through its pyridoxal phosphate cofactor; CO(2) is released and the remaining methylamine moiety is then transferred to the lipoamide cofactor of the H protein. The polypeptide is Probable glycine dehydrogenase (decarboxylating) subunit 1 (Listeria monocytogenes serotype 4b (strain F2365)).